Reading from the N-terminus, the 510-residue chain is Histidine ammonia-lyase (510 aa).

The 5-imidazolinone (Ala-Gly) cross-link spans 143–145; that stretch reads ASG. 2,3-didehydroalanine (Ser) is present on Ser-144.

Belongs to the PAL/histidase family. In terms of processing, contains an active site 4-methylidene-imidazol-5-one (MIO), which is formed autocatalytically by cyclization and dehydration of residues Ala-Ser-Gly.

The protein localises to the cytoplasm. It catalyses the reaction L-histidine = trans-urocanate + NH4(+). It participates in amino-acid degradation; L-histidine degradation into L-glutamate; N-formimidoyl-L-glutamate from L-histidine: step 1/3. The protein is Histidine ammonia-lyase of Shewanella sediminis (strain HAW-EB3).